We begin with the raw amino-acid sequence, 197 residues long: ATP synthase subunit delta', mitochondrial (197 aa).

The transit peptide at Met-1–Phe-19 directs the protein to the mitochondrion.

The protein belongs to the ATPase epsilon chain family. As to quaternary structure, F-type ATPases have 2 components, CF(1) - the catalytic core - and CF(0) - the membrane proton channel. CF(1) has five subunits: alpha(3), beta(3), gamma(1), delta(1), epsilon(1). CF(0) has three main subunits: a, b and c.

The protein resides in the mitochondrion. The protein localises to the mitochondrion inner membrane. Mitochondrial membrane ATP synthase (F(1)F(0) ATP synthase or Complex V) produces ATP from ADP in the presence of a proton gradient across the membrane which is generated by electron transport complexes of the respiratory chain. F-type ATPases consist of two structural domains, F(1) - containing the extramembraneous catalytic core, and F(0) - containing the membrane proton channel, linked together by a central stalk and a peripheral stalk. During catalysis, ATP turnover in the catalytic domain of F(1) is coupled via a rotary mechanism of the central stalk subunits to proton translocation. Part of the complex F(1) domain and of the central stalk which is part of the complex rotary element. Rotation of the central stalk against the surrounding alpha(3)beta(3) subunits leads to hydrolysis of ATP in three separate catalytic sites on the beta subunits. The protein is ATP synthase subunit delta', mitochondrial of Pisum sativum (Garden pea).